A 147-amino-acid chain; its full sequence is Ubiquitin-like-conjugating enzyme ATG10 (147 aa).

Cysteine 116 (glycyl thioester intermediate) is an active-site residue.

The protein belongs to the ATG10 family. In terms of assembly, forms homooligomers. Interacts with ATG10. Interacts with ATG7 and ATG12.

The protein resides in the preautophagosomal structure membrane. Functionally, E2-like enzyme required for the cytoplasm to vacuole transport (Cvt), autophagy and nucleophagy. Acts as an E2-like enzyme that catalyzes the conjugation of ATG12 to ATG5. ATG12 conjugation to ATG5 is required for proper localization of ATG8 to the preautophagosomal structure (PAS). Likely serves as an ATG5-recognition molecule. This is Ubiquitin-like-conjugating enzyme ATG10 from Kluyveromyces marxianus (strain DMKU3-1042 / BCC 29191 / NBRC 104275) (Yeast).